The following is a 197-amino-acid chain: Na(+)-translocating NADH-quinone reductase subunit E (197 aa).

6 consecutive transmembrane segments (helical) span residues 11–31, 35–55, 76–96, 108–128, 139–159, and 175–195; these read SVFI…FLAV, VSTA…SVPV, FLKF…LEMF, LGIY…VSFM, VVYG…LAGI, and LGIT…FSGI.

This sequence belongs to the NqrDE/RnfAE family. Composed of six subunits; NqrA, NqrB, NqrC, NqrD, NqrE and NqrF.

It localises to the cell inner membrane. The enzyme catalyses a ubiquinone + n Na(+)(in) + NADH + H(+) = a ubiquinol + n Na(+)(out) + NAD(+). Its function is as follows. NQR complex catalyzes the reduction of ubiquinone-1 to ubiquinol by two successive reactions, coupled with the transport of Na(+) ions from the cytoplasm to the periplasm. NqrA to NqrE are probably involved in the second step, the conversion of ubisemiquinone to ubiquinol. The protein is Na(+)-translocating NADH-quinone reductase subunit E of Neisseria meningitidis serogroup C (strain 053442).